Reading from the N-terminus, the 279-residue chain is Diaminopimelate epimerase (279 aa).

Positions 11 and 72 each coordinate substrate. The active-site Proton donor is Cys-81. Substrate contacts are provided by residues 82–83 (GN), Asn-187, and 205–206 (ER). Cys-215 functions as the Proton acceptor in the catalytic mechanism. 216–217 (GT) provides a ligand contact to substrate.

This sequence belongs to the diaminopimelate epimerase family. In terms of assembly, homodimer.

It is found in the cytoplasm. It carries out the reaction (2S,6S)-2,6-diaminopimelate = meso-2,6-diaminopimelate. It participates in amino-acid biosynthesis; L-lysine biosynthesis via DAP pathway; DL-2,6-diaminopimelate from LL-2,6-diaminopimelate: step 1/1. In terms of biological role, catalyzes the stereoinversion of LL-2,6-diaminopimelate (L,L-DAP) to meso-diaminopimelate (meso-DAP), a precursor of L-lysine and an essential component of the bacterial peptidoglycan. The polypeptide is Diaminopimelate epimerase (Aquifex aeolicus (strain VF5)).